The sequence spans 620 residues: Nuclear cap-binding protein subunit 3 (620 aa).

Lysine 12 participates in a covalent cross-link: Glycyl lysine isopeptide (Lys-Gly) (interchain with G-Cter in SUMO2). Over residues 15 to 28 (APAGPALGLPSPEA) the composition is skewed to low complexity. The interval 15-42 (APAGPALGLPSPEAESGVDRGEPEPMEV) is disordered. At serine 25 the chain carries Phosphoserine. Lysine 70 is covalently cross-linked (Glycyl lysine isopeptide (Lys-Gly) (interchain with G-Cter in SUMO2)). Serine 73 bears the Phosphoserine mark. The segment at 126–187 (ETIYICGVDE…MSSLPAQDKI (62 aa)) is RNA recognition motif (RRM) domain. Positions 155–158 (WLDD) match the WLDD motif; essential for 7-methylguanosine-containing mRNA cap binding motif. The span at 185-198 (DKIRSRDASEDKSA) shows a compositional bias: basic and acidic residues. Disordered stretches follow at residues 185–233 (DKIR…LDTL), 332–419 (HSGL…PKKS), and 436–620 (IRNS…EAES). Lysine 186 participates in a covalent cross-link: Glycyl lysine isopeptide (Lys-Gly) (interchain with G-Cter in SUMO2). Serine 209 and serine 210 each carry phosphoserine. 2 stretches are compositionally biased toward acidic residues: residues 209–230 (SSDD…DVEL) and 341–365 (EPIE…DMDA). Basic and acidic residues predominate over residues 366–388 (DDRVVVEYHEELPALKQPRERSA). A Phosphothreonine modification is found at threonine 413. Phosphoserine is present on serine 415. 2 stretches are compositionally biased toward basic and acidic residues: residues 459 to 474 (PPEK…DEKR) and 511 to 521 (VRREPSSDVHS). Lysine 541 participates in a covalent cross-link: Glycyl lysine isopeptide (Lys-Gly) (interchain with G-Cter in SUMO2). 2 stretches are compositionally biased toward basic and acidic residues: residues 554-569 (KTKE…RAPG) and 585-598 (IKEK…KSRL). Residues 611–620 (ESSSGSEAES) show a composition bias toward low complexity. Serine 620 is subject to Phosphoserine.

Belongs to the NCBP3 family. As to quaternary structure, component of an alternative cap-binding complex (CBC) composed of NCBP1/CBP80 and NCBP3. Interacts with SRRT, KPNA3, THOC5 and EIF4A3.

The protein resides in the nucleus. The protein localises to the cytoplasm. Associates with NCBP1/CBP80 to form an alternative cap-binding complex (CBC) which plays a key role in mRNA export. NCBP3 serves as adapter protein linking the capped RNAs (m7GpppG-capped RNA) to NCBP1/CBP80. Unlike the conventional CBC with NCBP2 which binds both small nuclear RNA (snRNA) and messenger (mRNA) and is involved in their export from the nucleus, the alternative CBC with NCBP3 does not bind snRNA and associates only with mRNA thereby playing a role in only mRNA export. The alternative CBC is particularly important in cellular stress situations such as virus infections and the NCBP3 activity is critical to inhibit virus growth. The sequence is that of Nuclear cap-binding protein subunit 3 from Homo sapiens (Human).